The chain runs to 82 residues: Large ribosomal subunit protein uL23 (82 aa).

The protein belongs to the universal ribosomal protein uL23 family. Part of the 50S ribosomal subunit. Contacts protein L29.

In terms of biological role, binds to 23S rRNA. One of the proteins that surrounds the polypeptide exit tunnel on the outside of the ribosome. This is Large ribosomal subunit protein uL23 from Sulfolobus acidocaldarius (strain ATCC 33909 / DSM 639 / JCM 8929 / NBRC 15157 / NCIMB 11770).